Reading from the N-terminus, the 511-residue chain is Ribose import ATP-binding protein RbsA (511 aa).

ABC transporter domains are found at residues 7-242 (LQIS…VGRE) and 256-500 (CSTT…SGTQ). 39–46 (GENGAGKS) is an ATP binding site.

This sequence belongs to the ABC transporter superfamily. Ribose importer (TC 3.A.1.2.1) family. In terms of assembly, the complex is composed of an ATP-binding protein (RbsA), two transmembrane proteins (RbsC) and a solute-binding protein (RbsB).

It is found in the cell inner membrane. It catalyses the reaction D-ribose(out) + ATP + H2O = D-ribose(in) + ADP + phosphate + H(+). Functionally, part of the ABC transporter complex RbsABC involved in ribose import. Responsible for energy coupling to the transport system. This Ruegeria sp. (strain TM1040) (Silicibacter sp.) protein is Ribose import ATP-binding protein RbsA.